Here is a 597-residue protein sequence, read N- to C-terminus: Elongation factor 4 (597 aa).

Residues 2 to 184 form the tr-type G domain; the sequence is KNIRNFSIIA…RLVRDIPAPE (183 aa). GTP-binding positions include 14–19 and 131–134; these read DHGKST and NKID.

This sequence belongs to the TRAFAC class translation factor GTPase superfamily. Classic translation factor GTPase family. LepA subfamily.

The protein localises to the cell inner membrane. The enzyme catalyses GTP + H2O = GDP + phosphate + H(+). Required for accurate and efficient protein synthesis under certain stress conditions. May act as a fidelity factor of the translation reaction, by catalyzing a one-codon backward translocation of tRNAs on improperly translocated ribosomes. Back-translocation proceeds from a post-translocation (POST) complex to a pre-translocation (PRE) complex, thus giving elongation factor G a second chance to translocate the tRNAs correctly. Binds to ribosomes in a GTP-dependent manner. The polypeptide is Elongation factor 4 (Edwardsiella ictaluri (strain 93-146)).